A 429-amino-acid chain; its full sequence is Adenylosuccinate synthetase (429 aa).

GTP is bound by residues 12 to 18 (GDEGKGK) and 40 to 42 (GHT). Asp-13 functions as the Proton acceptor in the catalytic mechanism. Mg(2+)-binding residues include Asp-13 and Gly-40. Residues 13-16 (DEGK), 38-41 (NAGH), Thr-129, Arg-143, Gln-223, Thr-238, and Arg-302 contribute to the IMP site. His-41 serves as the catalytic Proton donor. 298–304 (VVTGRKR) serves as a coordination point for substrate. Residues Arg-304, 330–332 (KLD), and 412–414 (STS) contribute to the GTP site.

Belongs to the adenylosuccinate synthetase family. Homodimer. The cofactor is Mg(2+).

It is found in the cytoplasm. The enzyme catalyses IMP + L-aspartate + GTP = N(6)-(1,2-dicarboxyethyl)-AMP + GDP + phosphate + 2 H(+). It participates in purine metabolism; AMP biosynthesis via de novo pathway; AMP from IMP: step 1/2. In terms of biological role, plays an important role in the de novo pathway of purine nucleotide biosynthesis. Catalyzes the first committed step in the biosynthesis of AMP from IMP. The protein is Adenylosuccinate synthetase of Bartonella tribocorum (strain CIP 105476 / IBS 506).